Here is a 369-residue protein sequence, read N- to C-terminus: N-methyltransferase imqF (369 aa).

Belongs to the methyltransferase superfamily.

Its pathway is secondary metabolite biosynthesis. Functionally, N-methyltransferase; part of the gene cluster that mediates the biosynthesis of imizoquins A to D, tripeptide-derived alkaloids that serve a protective role against oxidative stress that are essential for normal germination. ImqB is a canonical three-module NRPS that assembles the tripeptide backbone of the imizoquins via condensation of Trp, Tyr, and Leu-derived precursors. N-methylation by imqF and phenol oxidation by imqC, followed by cyclization via the FAD-dependent oxidase imqH carry out the three-step transformation of L-tyrosine into tetrahydroisoquinoline. Importantly, this sequence requires the presence of a free amine in the tyrosine moiety, indicating that isoquinoline formation occurs prior to peptide bond formation. The imidazolidin-4-one ring of imizoquins could form following additional oxidation of the methyl-derived bridgehead carbon by imqH. Lastly, O-methylation by imqG and leucine hydroxylation by imqE complete biosynthesis of the imizoquins. The protein is N-methyltransferase imqF of Aspergillus flavus (strain ATCC 200026 / FGSC A1120 / IAM 13836 / NRRL 3357 / JCM 12722 / SRRC 167).